We begin with the raw amino-acid sequence, 368 residues long: Ribosomal RNA large subunit methyltransferase M (368 aa).

S-adenosyl-L-methionine contacts are provided by residues serine 199, 232-235 (APGG), aspartate 251, aspartate 271, and aspartate 287. Lysine 316 serves as the catalytic Proton acceptor.

The protein belongs to the class I-like SAM-binding methyltransferase superfamily. RNA methyltransferase RlmE family. RlmM subfamily. In terms of assembly, monomer.

Its subcellular location is the cytoplasm. The catalysed reaction is cytidine(2498) in 23S rRNA + S-adenosyl-L-methionine = 2'-O-methylcytidine(2498) in 23S rRNA + S-adenosyl-L-homocysteine + H(+). Its function is as follows. Catalyzes the 2'-O-methylation at nucleotide C2498 in 23S rRNA. The sequence is that of Ribosomal RNA large subunit methyltransferase M from Aromatoleum aromaticum (strain DSM 19018 / LMG 30748 / EbN1) (Azoarcus sp. (strain EbN1)).